The sequence spans 219 residues: Aspartic protease inhibitor 10 (219 aa).

Positions 1-23 (MMKCLFLLCLCLVPIVVFSSTFT) are cleaved as a signal peptide. Positions 24–32 (SQNLIDLPS) are excised as a propeptide. The Vacuolar targeting signal signature appears at 26–31 (NLIDLP). Asn-51 carries an N-linked (GlcNAc...) asparagine glycan. 2 cysteine pairs are disulfide-bonded: Cys-80–Cys-125 and Cys-173–Cys-184.

The protein belongs to the protease inhibitor I3 (leguminous Kunitz-type inhibitor) family. In tubers and green buds of untreated plants. After abscisic acid treatment or mechanical wounding is mostly accumulated in leaves, to a lesser extent in stems, but not in roots.

Functionally, inhibitor of cathepsin D (aspartic protease) and trypsin (serine protease). Protects the plant by inhibiting proteases of invading organisms. This Solanum tuberosum (Potato) protein is Aspartic protease inhibitor 10 (CDI).